The following is a 712-amino-acid chain: 1,4-alpha-glucan branching enzyme GlgB (712 aa).

Aspartate 397 (nucleophile) is an active-site residue. Catalysis depends on glutamate 450, which acts as the Proton donor.

The protein belongs to the glycosyl hydrolase 13 family. GlgB subfamily. Monomer.

It carries out the reaction Transfers a segment of a (1-&gt;4)-alpha-D-glucan chain to a primary hydroxy group in a similar glucan chain.. The protein operates within glycan biosynthesis; glycogen biosynthesis. Its function is as follows. Catalyzes the formation of the alpha-1,6-glucosidic linkages in glycogen by scission of a 1,4-alpha-linked oligosaccharide from growing alpha-1,4-glucan chains and the subsequent attachment of the oligosaccharide to the alpha-1,6 position. The polypeptide is 1,4-alpha-glucan branching enzyme GlgB (Bradyrhizobium sp. (strain ORS 278)).